The following is a 567-amino-acid chain: Geranylgeranyl transferase type-2 subunit alpha (567 aa).

PFTA repeat units lie at residues 44–78 (LDESVLELTSQILGANPDFATLWNCRREVLQRLEV), 88–122 (LVKAELGFLESCLRVNPKSYGTWHHRCWLLGRLPE), 124–158 (NWARELELCARFLEVDERNFHCWDYRRFVASQAAV), 159–193 (PPAEELAFTDSLITRNFSNYSSWHYRSCLLPQLHP), 207–241 (VLLKELELVQNAFFTDPNDQSAWFYHRWLLGRADP), and 363–397 (VLQSELESCKELQELEPENKWCLLTIILLMRALDP). Position 98 is a phosphoserine (Ser-98). LRR repeat units lie at residues 442–463 (DVRVLHLGHKDLTVLCHLEQLL), 464–486 (LVTHLDLSHNRLRALPPALAALR), 487–508 (CLEVLQANDNAIESLDGVTNLP), 509–530 (RLQELSLCNNRLQQPAVLQPLA), and 534–555 (RLVLLNLQDNPLCQAVGISEHL).

It belongs to the protein prenyltransferase subunit alpha family. In terms of assembly, heterotrimer composed of RABGGTA, RABGGTB and CHM; within this trimer, RABGGTA and RABGGTB form the catalytic component B, while CHM (component A) mediates peptide substrate binding. The Rab GGTase dimer (RGGT) interacts with CHM (component A) prior to Rab protein binding; the association is stabilized by geranylgeranyl pyrophosphate (GGpp). The CHM:RGGT:Rab complex is destabilized by GGpp. Interacts with non-phosphorylated form of RAB8A; phosphorylation of RAB8A disrupts this interaction.

It carries out the reaction geranylgeranyl diphosphate + L-cysteinyl-[protein] = S-geranylgeranyl-L-cysteinyl-[protein] + diphosphate. Its activity is regulated as follows. The enzymatic reaction requires the aid of a Rab escort protein (also called component A), such as CHM. Its function is as follows. Catalyzes the transfer of a geranylgeranyl moiety from geranylgeranyl diphosphate to both cysteines of Rab proteins with the C-terminal sequence -XXCC, -XCXC and -CCXX, such as RAB1A, RAB3A, RAB5A and RAB7A. The polypeptide is Geranylgeranyl transferase type-2 subunit alpha (RABGGTA) (Sus scrofa (Pig)).